The sequence spans 401 residues: Probable tRNA sulfurtransferase (401 aa).

The THUMP domain occupies 63–168 (TTAEQALSCL…EREAFLYGAR (106 aa)). Residues 186-187 (LL), 211-212 (YF), Arg268, Gly290, and Gln299 contribute to the ATP site.

It belongs to the ThiI family.

Its subcellular location is the cytoplasm. The catalysed reaction is [ThiI sulfur-carrier protein]-S-sulfanyl-L-cysteine + a uridine in tRNA + 2 reduced [2Fe-2S]-[ferredoxin] + ATP + H(+) = [ThiI sulfur-carrier protein]-L-cysteine + a 4-thiouridine in tRNA + 2 oxidized [2Fe-2S]-[ferredoxin] + AMP + diphosphate. It carries out the reaction [ThiS sulfur-carrier protein]-C-terminal Gly-Gly-AMP + S-sulfanyl-L-cysteinyl-[cysteine desulfurase] + AH2 = [ThiS sulfur-carrier protein]-C-terminal-Gly-aminoethanethioate + L-cysteinyl-[cysteine desulfurase] + A + AMP + 2 H(+). It participates in cofactor biosynthesis; thiamine diphosphate biosynthesis. Its function is as follows. Catalyzes the ATP-dependent transfer of a sulfur to tRNA to produce 4-thiouridine in position 8 of tRNAs, which functions as a near-UV photosensor. Also catalyzes the transfer of sulfur to the sulfur carrier protein ThiS, forming ThiS-thiocarboxylate. This is a step in the synthesis of thiazole, in the thiamine biosynthesis pathway. The sulfur is donated as persulfide by IscS. This chain is Probable tRNA sulfurtransferase, found in Treponema pallidum subsp. pallidum (strain SS14).